The following is a 653-amino-acid chain: Probable potassium transport system protein Kup (653 aa).

A run of 12 helical transmembrane segments spans residues alanine 37–tyrosine 57, valine 79–valine 99, isoleucine 134–isoleucine 154, alanine 168–valine 188, isoleucine 196–valine 216, leucine 243–tyrosine 263, tryptophan 278–leucine 298, leucine 320–phenylalanine 340, isoleucine 368–phenylalanine 388, alanine 397–alanine 417, tryptophan 426–asparagine 446, and valine 450–threonine 470.

This sequence belongs to the HAK/KUP transporter (TC 2.A.72) family.

The protein localises to the cell inner membrane. The catalysed reaction is K(+)(in) + H(+)(in) = K(+)(out) + H(+)(out). Its function is as follows. Transport of potassium into the cell. Likely operates as a K(+):H(+) symporter. The chain is Probable potassium transport system protein Kup from Myxococcus xanthus (strain DK1622).